Consider the following 190-residue polypeptide: Crossover junction endodeoxyribonuclease RuvC (190 aa).

Residues Asp7, Glu68, and Asp141 contribute to the active site. Asp7, Glu68, and Asp141 together coordinate Mg(2+).

This sequence belongs to the RuvC family. In terms of assembly, homodimer which binds Holliday junction (HJ) DNA. The HJ becomes 2-fold symmetrical on binding to RuvC with unstacked arms; it has a different conformation from HJ DNA in complex with RuvA. In the full resolvosome a probable DNA-RuvA(4)-RuvB(12)-RuvC(2) complex forms which resolves the HJ. Mg(2+) serves as cofactor.

The protein resides in the cytoplasm. It catalyses the reaction Endonucleolytic cleavage at a junction such as a reciprocal single-stranded crossover between two homologous DNA duplexes (Holliday junction).. In terms of biological role, the RuvA-RuvB-RuvC complex processes Holliday junction (HJ) DNA during genetic recombination and DNA repair. Endonuclease that resolves HJ intermediates. Cleaves cruciform DNA by making single-stranded nicks across the HJ at symmetrical positions within the homologous arms, yielding a 5'-phosphate and a 3'-hydroxyl group; requires a central core of homology in the junction. The consensus cleavage sequence is 5'-(A/T)TT(C/G)-3'. Cleavage occurs on the 3'-side of the TT dinucleotide at the point of strand exchange. HJ branch migration catalyzed by RuvA-RuvB allows RuvC to scan DNA until it finds its consensus sequence, where it cleaves and resolves the cruciform DNA. This Endomicrobium trichonymphae protein is Crossover junction endodeoxyribonuclease RuvC.